The primary structure comprises 76 residues: MSKDQQSFEEMMQELENIVQKLDNETVSLEESLELYQRGMKLSATCDATLKDAEKKVNQLIKDEAEDEENGKEVNE.

The protein belongs to the XseB family. In terms of assembly, heterooligomer composed of large and small subunits.

Its subcellular location is the cytoplasm. It carries out the reaction Exonucleolytic cleavage in either 5'- to 3'- or 3'- to 5'-direction to yield nucleoside 5'-phosphates.. Its function is as follows. Bidirectionally degrades single-stranded DNA into large acid-insoluble oligonucleotides, which are then degraded further into small acid-soluble oligonucleotides. The protein is Exodeoxyribonuclease 7 small subunit of Staphylococcus haemolyticus (strain JCSC1435).